The following is a 261-amino-acid chain: MAAPLIQLNNIHLRFSAEPVLEGINLTIHQSEIVTIIGPNGAGKSSLVKVITGLIAPTTGSITHCAQGKQPLRIGYMPQTLHLDPSMPIKVSRFLSLAGPKAPSRSARKAALEQVGIANLSSAQMHNLSGGEFQRVLLARAILQRPNLLVLDEPLQGVDVNGQIELYRLIAELRQQLQCAIVMVSHDLHLVMAQTDSVVCLNRHMCCHGQPESVSKHPEYLKLFGKQASDDLAVYTHNHDHHHDMHGDVVGCSDECDHHHD.

Residues 6–227 enclose the ABC transporter domain; it reads IQLNNIHLRF…PEYLKLFGKQ (222 aa). Residue 38–45 participates in ATP binding; that stretch reads GPNGAGKS.

This sequence belongs to the ABC transporter superfamily. Zinc importer (TC 3.A.1.15.5) family. In terms of assembly, the complex is composed of two ATP-binding proteins (ZnuC), two transmembrane proteins (ZnuB) and a solute-binding protein (ZnuA).

It is found in the cell inner membrane. It carries out the reaction Zn(2+)(out) + ATP(in) + H2O(in) = Zn(2+)(in) + ADP(in) + phosphate(in) + H(+)(in). Functionally, part of the ABC transporter complex ZnuABC involved in zinc import. Responsible for energy coupling to the transport system. The protein is Zinc import ATP-binding protein ZnuC of Saccharophagus degradans (strain 2-40 / ATCC 43961 / DSM 17024).